The chain runs to 152 residues: Endoribonuclease YbeY (152 aa).

Histidine 101, histidine 105, and histidine 111 together coordinate Zn(2+). The segment at proline 132–arginine 152 is disordered. Positions lysine 141–arginine 152 are enriched in basic residues.

It belongs to the endoribonuclease YbeY family. The cofactor is Zn(2+).

It localises to the cytoplasm. Its function is as follows. Single strand-specific metallo-endoribonuclease involved in late-stage 70S ribosome quality control and in maturation of the 3' terminus of the 16S rRNA. This Koribacter versatilis (strain Ellin345) protein is Endoribonuclease YbeY.